The chain runs to 695 residues: Centrosomal protein of 89 kDa (695 aa).

Disordered regions lie at residues 24 to 54 (LIPA…RPRS), 66 to 147 (TGRT…GDED), and 167 to 272 (AVPL…SEVL). Residues 34-49 (PAVPRTPPPRSPNPSP) are compositionally biased toward pro residues. 2 stretches are compositionally biased toward acidic residues: residues 124-146 (DEDD…EGDE) and 178-189 (DSDVDEETEDSA). A compositionally biased stretch (polar residues) spans 209–226 (GQTQPSSLPQPRSVSRRS). Basic and acidic residues predominate over residues 251 to 271 (TNKESPVRVNERDRSSEDSEV). Coiled-coil stretches lie at residues 276-368 (LEVQ…RYQA) and 406-632 (AYED…LEKE).

It is found in the cytoplasm. The protein resides in the cytosol. Its subcellular location is the cytoskeleton. It localises to the microtubule organizing center. The protein localises to the centrosome. It is found in the spindle pole. The protein resides in the centriole. Its subcellular location is the mitochondrion intermembrane space. Required for ciliogenesis. Also plays a role in mitochondrial metabolism where it may modulate complex IV activity. The sequence is that of Centrosomal protein of 89 kDa (cep89) from Danio rerio (Zebrafish).